A 477-amino-acid polypeptide reads, in one-letter code: S-triazine hydrolase (477 aa).

Composition is skewed to low complexity over residues 38-73 (SPTTSTSAAPKSSTPPGWQCSPASSTPTPTSHKSSS) and 120-132 (PLSSTTRTSDPTT). Disordered regions lie at residues 38-77 (SPTTSTSAAPKSSTPPGWQCSPASSTPTPTSHKSSSGVVH) and 120-143 (PLSSTTRTSDPTTSPAPGPPGSPF).

It belongs to the metallo-dependent hydrolases superfamily. ATZ/TRZ family.

It participates in xenobiotic degradation; melamine degradation. Hydrolytic deamination of the S-triazine substrate melamine. The protein is S-triazine hydrolase (trzA) of Gordonia rubripertincta (Rhodococcus corallinus).